The primary structure comprises 365 residues: Flagellar P-ring protein 2 (365 aa).

A signal peptide spans 1 to 19; that stretch reads MKKWIVMASLLLAALPAMS.

It belongs to the FlgI family. As to quaternary structure, the basal body constitutes a major portion of the flagellar organelle and consists of four rings (L,P,S, and M) mounted on a central rod.

The protein localises to the periplasm. It localises to the bacterial flagellum basal body. Its function is as follows. Assembles around the rod to form the L-ring and probably protects the motor/basal body from shearing forces during rotation. In Chromobacterium violaceum (strain ATCC 12472 / DSM 30191 / JCM 1249 / CCUG 213 / NBRC 12614 / NCIMB 9131 / NCTC 9757 / MK), this protein is Flagellar P-ring protein 2.